The following is a 592-amino-acid chain: Keratin, type II cytoskeletal 5 (592 aa).

Low complexity predominate over residues 1–18 (MSRQSSVSFRSGGSRSFS). The interval 1 to 20 (MSRQSSVSFRSGGSRSFSTA) is disordered. The tract at residues 1 to 169 (MSRQSSVSFR…DPSIQRVRTE (169 aa)) is head. A phosphoserine mark is found at serine 5, serine 8, serine 16, and serine 21. Phosphothreonine; by CDK1 is present on threonine 24. Residues serine 26, serine 36, serine 50, serine 64, serine 71, serine 75, and serine 82 each carry the phosphoserine modification. Threonine 153 carries the post-translational modification Phosphothreonine; by CDK1. Position 168 is a phosphothreonine; by AURKB (threonine 168). The coil 1A stretch occupies residues 170-205 (EREQIKTLNNKFASFIDKVRFLEQQNKVLDTKWTLL). The IF rod domain occupies 170–483 (EREQIKTLNN…KLLEGEECRL (314 aa)). A linker 1 region spans residues 206–224 (QEQGTKTVRQNLEPLFEQY). Positions 225-317 (INNLRRQLDS…FFDAELSQMQ (93 aa)) are coil 1B. The interval 318–340 (THVSDTSVVLSMDNNRNLDLDSI) is linker 12. A coil 2 region spans residues 341–479 (IAEVKAQYEE…ATYRKLLEGE (139 aa)). The tract at residues 480–592 (ECRLSGEGVG…TSSSRKSFKS (113 aa)) is tail. The tract at residues 568–592 (GSGGGSSSSVKFVSTTSSSRKSFKS) is disordered. Low complexity predominate over residues 574 to 592 (SSSVKFVSTTSSSRKSFKS).

It belongs to the intermediate filament family. Heterodimer of a type I and a type II keratin. Heterodimer with type I keratin KRT25 leading to the formation of keratin intermediate filament (KIF) network. Forms a heterodimer (via 2B domains) with KRT14 (via 2B domains). Interacts with TCHP. Interacts with EPPK1. Interacts with AMELX. Interacts with PKP1 (via N-terminus) and PKP2. In terms of processing, phosphorylated by CDK1, AURKB and Rho-kinase, phosphorylation is regulated by the cell cycle. Thr-24 phosphorylation, mediated by CDK1, peaks during prometaphase or metaphase cells with phosphorylated filamentous structures evident throughout the cytoplasm during early mitosis. CDK1 phosphorylates Thr-24 in mitotic cells at the site of injury. Post-translationally, O-glycosylated.

The protein resides in the cytoplasm. Its function is as follows. Required for the formation of keratin intermediate filaments in the basal epidermis and maintenance of the skin barrier in response to mechanical stress. Regulates the recruitment of Langerhans cells to the epidermis, potentially by modulation of the abundance of macrophage chemotactic cytokines, macrophage inflammatory cytokines and CTNND1 localization in keratinocytes. In Pan troglodytes (Chimpanzee), this protein is Keratin, type II cytoskeletal 5 (KRT5).